A 1158-amino-acid chain; its full sequence is cGMP-specific 3',5'-cyclic phosphodiesterase (1158 aa).

2 disordered regions span residues 1 to 137 (MTDV…SQHD) and 195 to 216 (SPTV…SIPE). The segment covering 30–71 (ATTSAAASASSSQAKPLTNGAKKAATAAAAAGAEEGGASASN) has biased composition (low complexity). A compositionally biased stretch (polar residues) spans 108-135 (GSTSKSSSIHTQTSQQERAGRPTSSASQ). A compositionally biased stretch (low complexity) spans 202-215 (SPRSLSNSSASSIP). GAF domains lie at 242-394 (DIDV…GIGI) and 426-640 (NLEC…GLGI). A PDEase domain is found at 670–993 (SQDQTEKLTQ…RNWQDLAEKV (324 aa)). Catalysis depends on histidine 746, which acts as the Proton donor. The a divalent metal cation site is built by histidine 750, histidine 786, aspartate 787, and aspartate 897. Disordered stretches follow at residues 1034 to 1065 (QSQQ…TGAL) and 1097 to 1158 (VSED…CALL). Basic and acidic residues predominate over residues 1041–1052 (GSEDSHTPEHQR). A compositionally biased stretch (low complexity) spans 1114–1130 (AAGSMGRMSASSSTSSA). Residues 1148-1158 (SKKRSKLCALL) are compositionally biased toward basic residues. Cysteine 1155 is modified (cysteine methyl ester). Cysteine 1155 is lipidated: S-farnesyl cysteine. A propeptide spans 1156–1158 (ALL) (removed in mature form).

This sequence belongs to the cyclic nucleotide phosphodiesterase family. As to quaternary structure, interacts with PrBP. The cofactor is a divalent metal cation.

It localises to the cell membrane. The enzyme catalyses 3',5'-cyclic GMP + H2O = GMP + H(+). Has a role regulating cGMP transport in Malpighian tubule principal cells. This Drosophila ananassae (Fruit fly) protein is cGMP-specific 3',5'-cyclic phosphodiesterase.